Here is a 261-residue protein sequence, read N- to C-terminus: Proliferating cell nuclear antigen (261 aa).

3 positions are modified to N6-acetyllysine: Lys-14, Lys-77, and Lys-80. The DNA-binding element occupies 61 to 80 (RCDRNLAMGVNLTSMSKILK). Cys-135 and Cys-162 are oxidised to a cystine. Lys-164 is covalently cross-linked (Glycyl lysine isopeptide (Lys-Gly) (interchain with G-Cter in SUMO2); alternate). Lys-164 is covalently cross-linked (Glycyl lysine isopeptide (Lys-Gly) (interchain with G-Cter in ubiquitin); alternate). Tyr-211 carries the post-translational modification Phosphotyrosine; by EGFR. Lys-248 is modified (N6-acetyllysine). Lys-254 participates in a covalent cross-link: Glycyl lysine isopeptide (Lys-Gly) (interchain with G-Cter in SUMO2).

It belongs to the PCNA family. Homotrimer. Interacts with p300/EP300; the interaction occurs on chromatin in UV-irradiated damaged cells. Interacts with CREBBP (via transactivation domain and C-terminus); the interaction occurs on chromatin in UV-irradiated damaged cells. Directly interacts with POLD1, POLD3 and POLD4 subunits of the DNA polymerase delta complex, POLD3 being the major interacting partner; the interaction with POLD3 is inhibited by CDKN1A/p21(CIP1). Forms a complex with activator 1 heteropentamer in the presence of ATP. Interacts with EXO1, POLH, POLK, DNMT1, ERCC5, FEN1, CDC6 and POLDIP2. Interacts with POLB. Interacts with APEX2; this interaction is triggered by reactive oxygen species and increased by misincorporation of uracil in nuclear DNA. Forms a ternary complex with DNTTIP2 and core histone. Interacts with KCTD10 and PPP1R15A. Interacts with SMARCA5/SNF2H. Interacts with BAZ1B/WSTF; the interaction is direct and is required for BAZ1B/WSTF binding to replication foci during S phase. Interacts with HLTF and SHPRH. Interacts with NUDT15; this interaction is disrupted in response to UV irradiation and acetylation. Interacts with CDKN1A/p21(CIP1) and CDT1; interacts via their PIP-box which also recruits the DCX(DTL) complex. The interaction with CDKN1A inhibits POLD3 binding. Interacts with DDX11. Interacts with EGFR; positively regulates PCNA. Interacts with PARPBP. Interacts (when ubiquitinated) with SPRTN; leading to enhance RAD18-mediated PCNA ubiquitination. Interacts (when polyubiquitinated) with ZRANB3. Interacts with SMARCAD1. Interacts with CDKN1C. Interacts with PCLAF (via PIP-box). Interacts with RTEL1 (via PIP-box); the interaction is direct and essential for the suppression of telomere fragility. Interacts with FAM111A (via PIP-box); the interaction is direct and required for PCNA loading on chromatin binding. Interacts with LIG1. Interacts with SETMAR. Interacts with ANKRD17. Interacts with FBXO18/FBH1 (via PIP-box); the interaction recruits the DCX(DTL) complex and promotes ubiquitination and degradation of FBXO18/FBH1. Interacts with POLN. Interacts with SDE2 (via PIP-box); the interaction is direct and prevents ultraviolet light induced monoubiquitination. Component of the replisome complex composed of at least DONSON, MCM2, MCM7, PCNA and TICRR; interaction at least with PCNA occurs during DNA replication. Interacts with MAPK15; the interaction is chromatin binding dependent and prevents MDM2-mediated PCNA destruction by inhibiting the association of PCNA with MDM2. Interacts with PARP10 (via PIP-box). Interacts with DDI2. Interacts with HMCES (via PIP-box). Interacts with TRAIP (via PIP-box). Interacts with UHRF2. Interacts with ALKBH2; this interaction is enhanced during the S-phase of the cell cycle. Interacts with ATAD5; the interaction promotes USP1-mediated PCNA deubiquitination. Interacts (when phosphorylated) with GRB2. Interacts with nuclear UNG; this interaction mediates UNG recruitment to S-phase replication foci. Interacts with ERCC6L2 (via an atypical PIP-box); this interaction facilitates cenrtomeric localization of ERCC6L2. Phosphorylated. Phosphorylation at Tyr-211 by EGFR stabilizes chromatin-associated PCNA. In terms of processing, acetylated by CREBBP and p300/EP300; preferentially acetylated by CREBBP on Lys-80, Lys-13 and Lys-14 and on Lys-77 by p300/EP300 upon loading on chromatin in response to UV irradiation. Lysine acetylation disrupts association with chromatin, hence promoting PCNA ubiquitination and proteasomal degradation in response to UV damage in a CREBBP- and EP300-dependent manner. Acetylation disrupts interaction with NUDT15 and promotes degradation. Post-translationally, ubiquitinated. Following DNA damage, can be either monoubiquitinated to stimulate direct bypass of DNA lesions by specialized DNA polymerases or polyubiquitinated to promote recombination-dependent DNA synthesis across DNA lesions by template switching mechanisms. Following induction of replication stress, monoubiquitinated by the UBE2B-RAD18 complex on Lys-164, leading to recruit translesion (TLS) polymerases, which are able to synthesize across DNA lesions in a potentially error-prone manner. An error-free pathway also exists and requires non-canonical polyubiquitination on Lys-164 through 'Lys-63' linkage of ubiquitin moieties by the E2 complex UBE2N-UBE2V2 and the E3 ligases, HLTF, RNF8 and SHPRH. This error-free pathway, also known as template switching, employs recombination mechanisms to synthesize across the lesion, using as a template the undamaged, newly synthesized strand of the sister chromatid. Monoubiquitination at Lys-164 also takes place in undamaged proliferating cells, and is mediated by the DCX(DTL) complex, leading to enhance PCNA-dependent translesion DNA synthesis. Sumoylated during S phase. Methylated on glutamate residues by ARMT1.

The protein resides in the nucleus. Its function is as follows. Auxiliary protein of DNA polymerase delta and epsilon, is involved in the control of eukaryotic DNA replication by increasing the polymerase's processibility during elongation of the leading strand. Induces a robust stimulatory effect on the 3'-5' exonuclease and 3'-phosphodiesterase, but not apurinic-apyrimidinic (AP) endonuclease, APEX2 activities. Has to be loaded onto DNA in order to be able to stimulate APEX2. Plays a key role in DNA damage response (DDR) by being conveniently positioned at the replication fork to coordinate DNA replication with DNA repair and DNA damage tolerance pathways. Acts as a loading platform to recruit DDR proteins that allow completion of DNA replication after DNA damage and promote postreplication repair: Monoubiquitinated PCNA leads to recruitment of translesion (TLS) polymerases, while 'Lys-63'-linked polyubiquitination of PCNA is involved in error-free pathway and employs recombination mechanisms to synthesize across the lesion. This Bos taurus (Bovine) protein is Proliferating cell nuclear antigen (PCNA).